Reading from the N-terminus, the 2326-residue chain is Chondroitin sulfate proteoglycan 4 (2326 aa).

An N-terminal signal peptide occupies residues 1–29 (MLLSPGHPLSAPALALILTLALLVRSTAP). Laminin G-like domains are found at residues 30–193 (ASFF…HEGC) and 203–381 (VGLG…AAGC). The interval 30-640 (ASFFGENHLE…HRGGPAQDLT (611 aa)) is globular or compact configuration stabilized by disulfide bonds. Residues 30–640 (ASFFGENHLE…HRGGPAQDLT (611 aa)) are neurite growth inhibition. Over 30–2225 (ASFFGENHLE…SGFLGFLEAN (2196 aa)) the chain is Extracellular. Asn-130 carries an N-linked (GlcNAc...) asparagine glycan. A disulfide bridge links Cys-170 with Cys-193. Asn-349 carries N-linked (GlcNAc...) asparagine glycosylation. A disulfide bridge links Cys-355 with Cys-381. Asn-428 carries an N-linked (GlcNAc...) asparagine glycan. 3 CSPG repeats span residues 429 to 524 (FTQL…LEVS), 554 to 646 (PRIV…VSDG), and 663 to 765 (AIQI…LEVQ). Residues 575–1044 (GPEIFQAYDP…RGGQRLLTTD (470 aa)) form an interaction with COL6A2 region. Residues 632–1450 (RGGPAQDLTF…SETQTDGFIL (819 aa)) are interaction with COL5A1. N-linked (GlcNAc...) asparagine glycans are attached at residues Asn-686 and Asn-773. CSPG repeat units lie at residues 784–882 (TVWM…FRVT) and 902–993 (NAPV…FVAT). Ser-999 is a glycosylation site (O-linked (Xyl...) (chondroitin sulfate) serine). CSPG repeat units follow at residues 1022–1114 (APVQ…VSDG), 1130–1220 (YLHV…LSVA), 1242–1341 (PLQL…LDVA), 1360–1453 (TVIP…LLAN), 1477–1567 (PPVI…LSDG), 1585–1683 (LLSL…LLLS), 1708–1807 (PSRL…FRAH), 1836–1928 (PPQP…MSDG), and 1945–2033 (TIEV…VLAL). N-linked (GlcNAc...) asparagine glycans are attached at residues Asn-1135 and Asn-1206. N-linked (GlcNAc...) asparagine glycans are attached at residues Asn-1368 and Asn-1453. The neurite growth inhibition stretch occupies residues 1590-2225 (GSRKLTVCPE…SGFLGFLEAN (636 aa)). The segment at 1591–2225 (SRKLTVCPES…SGFLGFLEAN (635 aa)) is cysteine-containing. Asn-1649 is a glycosylation site (N-linked (GlcNAc...) asparagine). 5 N-linked (GlcNAc...) asparagine glycosylation sites follow: Asn-1913, Asn-2020, Asn-2038, Asn-2044, and Asn-2079. Residues 2042–2151 (TVNVTVQALL…TGDRLTLELQ (110 aa)) form a CSPG 15 repeat. The tract at residues 2187–2210 (RTETEKTGKSTPTGQPGQAASSPM) is disordered. Residues 2195–2210 (KSTPTGQPGQAASSPM) show a composition bias toward polar residues. The chain crosses the membrane as a helical span at residues 2226-2250 (MFSVIIPVCLVLLLLALILPLLFYL). Residues 2251-2326 (RKRNKTGKHD…PALRNGQYWV (76 aa)) lie on the Cytoplasmic side of the membrane. Position 2256 is a phosphothreonine; by PKC/PRKCA (Thr-2256). The short motif at 2324–2326 (YWV) is the PDZ-binding element.

Interacts with GRIP1, GRIP2 and GRIA2. Forms a ternary complex with GRIP1 and GRIA2. Interacts with ITGA4 through its chondroitin sulfate glycosaminoglycan. Interacts with BCAR1, CDC42 and ACK1. Interacts with MMP16. Interacts with the first PDZ domain of MPDZ. Interacts with PRKCA. Interacts with LGALS3 and the integrin composed of ITGB1 and ITGA3. Binds TNC, laminin-1, COL5A1 and COL6A2. Interacts with PLG and angiostatin. Binds FGF2 and PDGFA. In terms of processing, N-glycosylated. Post-translationally, O-glycosylated; contains glycosaminoglycan chondroitin sulfate which are required for proper localization and function in stress fiber formation. Involved in interaction with MMP16 and ITGA4. Phosphorylation by PRKCA regulates its subcellular location and function in cell motility. As to expression, neural cells and also extraneural tissues, especially in the developing mesenchyme.

It is found in the cell membrane. The protein resides in the apical cell membrane. The protein localises to the cell projection. Its subcellular location is the lamellipodium membrane. It localises to the cell surface. In terms of biological role, proteoglycan playing a role in cell proliferation and migration which stimulates endothelial cells motility during microvascular morphogenesis. May also inhibit neurite outgrowth and growth cone collapse during axon regeneration. Cell surface receptor for collagen alpha 2(VI) which may confer cells ability to migrate on that substrate. Binds through its extracellular N-terminus growth factors, extracellular matrix proteases modulating their activity. May regulate MPP16-dependent degradation and invasion of type I collagen participating in melanoma cells invasion properties. May modulate the plasminogen system by enhancing plasminogen activation and inhibiting angiostatin. Also functions as a signal transducing protein by binding through its cytoplasmic C-terminus scaffolding and signaling proteins. May promote retraction fiber formation and cell polarization through Rho GTPase activation. May stimulate alpha-4, beta-1 integrin-mediated adhesion and spreading by recruiting and activating a signaling cascade through CDC42, ACK1 and BCAR1. May activate FAK and ERK1/ERK2 signaling cascades. This is Chondroitin sulfate proteoglycan 4 (Cspg4) from Rattus norvegicus (Rat).